A 224-amino-acid polypeptide reads, in one-letter code: Putative N-acetylmannosamine-6-phosphate 2-epimerase (224 aa).

This sequence belongs to the NanE family.

It catalyses the reaction an N-acyl-D-glucosamine 6-phosphate = an N-acyl-D-mannosamine 6-phosphate. The protein operates within amino-sugar metabolism; N-acetylneuraminate degradation; D-fructose 6-phosphate from N-acetylneuraminate: step 3/5. In terms of biological role, converts N-acetylmannosamine-6-phosphate (ManNAc-6-P) to N-acetylglucosamine-6-phosphate (GlcNAc-6-P). In Staphylococcus carnosus (strain TM300), this protein is Putative N-acetylmannosamine-6-phosphate 2-epimerase.